Consider the following 223-residue polypeptide: Ubiquitin-conjugating enzyme E2 S-A (223 aa).

Residues 11 to 157 form the UBC core domain; that stretch reads HIIRLVYKEV…ARLLTEIHGG (147 aa). The active-site Glycyl thioester intermediate is the Cys-95. A disordered region spans residues 170–223; sequence QDLASGASASSADPMIPGVLGGAEGPMAKKHAGERDKKLAAKKKLDKKRALRRL. A compositionally biased stretch (basic residues) spans 209-223; the sequence is AAKKKLDKKRALRRL.

This sequence belongs to the ubiquitin-conjugating enzyme family.

It carries out the reaction S-ubiquitinyl-[E1 ubiquitin-activating enzyme]-L-cysteine + [E2 ubiquitin-conjugating enzyme]-L-cysteine = [E1 ubiquitin-activating enzyme]-L-cysteine + S-ubiquitinyl-[E2 ubiquitin-conjugating enzyme]-L-cysteine.. Its pathway is protein modification; protein ubiquitination. In terms of biological role, catalyzes the covalent attachment of ubiquitin to other proteins. Acts as an essential factor of the anaphase promoting complex/cyclosome (APC/C), a cell cycle-regulated ubiquitin ligase that controls progression through mitosis. Acts by specifically elongating 'Lys-11'-linked polyubiquitin chains initiated by the E2 enzyme ube2c/ubch10 on APC/C substrates, enhancing the degradation of APC/C substrates by the proteasome and promoting mitotic exit. This chain is Ubiquitin-conjugating enzyme E2 S-A (ube2s-a), found in Xenopus laevis (African clawed frog).